The sequence spans 258 residues: UPF0246 protein PM0066 (258 aa).

This sequence belongs to the UPF0246 family.

The polypeptide is UPF0246 protein PM0066 (Pasteurella multocida (strain Pm70)).